The primary structure comprises 287 residues: 4,4'-diapophytoene synthase (287 aa).

(2E,6E)-farnesyl diphosphate-binding positions include 18–21 (HSKS), Y41, and R45. Positions 48 and 52 each coordinate Mg(2+). Residue Q165 participates in (2E,6E)-farnesyl diphosphate binding. N168 serves as a coordination point for Mg(2+). (2E,6E)-farnesyl diphosphate is bound at residue R171. A Mg(2+)-binding site is contributed by D172. Residue Y248 coordinates (2E,6E)-farnesyl diphosphate.

It belongs to the phytoene/squalene synthase family. CrtM subfamily. It depends on Mg(2+) as a cofactor.

It catalyses the reaction 2 (2E,6E)-farnesyl diphosphate = 15-cis-4,4'-diapophytoene + 2 diphosphate. Its pathway is carotenoid biosynthesis; staphyloxanthin biosynthesis; staphyloxanthin from farnesyl diphosphate: step 1/5. Functionally, involved in the biosynthesis of the yellow-orange carotenoid staphyloxanthin, which plays a role in the virulence via its protective function against oxidative stress. Catalyzes the head-to-head condensation of two molecules of farnesyl diphosphate (FPP) into the colorless C(30) carotenoid 4,4'-diapophytoene (dehydrosqualene). This chain is 4,4'-diapophytoene synthase (crtM), found in Staphylococcus aureus (strain bovine RF122 / ET3-1).